A 556-amino-acid polypeptide reads, in one-letter code: MHPMALHMVLPAHLPFLSPEVLRLLEVHVKKWMHFQRWGLPRRVEESLRQLMPNPPLYYQPGNDQPVSFNLNNTSQVSLHRSETISLQTWCSCVAGQPIQTFWVSEWSTMNPEQRHHCQQTPNPMALALPSPALKALSGPHPQSGGQDNDSGSDLQQKYSQLFCGLPSLHSESLVATFMGSQGLPKIENVPKPPLKDPFLFNDLSFPQLLPKTSPQSAPPSSPLSPNWVSPSDHQRAQINVPFLTLAEYEALEWHLLQRQLQLQWGWPAALQRSQHTQCLMQHEPCGKAQSPETTTASQTGKSISVLTRELLFFPEHARKLLEFHIQKQSIRHRWGLPQKIQQSIQLLLTSTDQQTVSSSSTALANVSIPQPVALEANGACDVLSPIAAPVSIPRPHLLTQVKAILQSHIDSKCGQIHQGKIPACVHRSWDCRISGVLAVAPFPCIPESQFLVLQTASDPDLHHKVMPWMPTALDQQQQALPGTVTEHPKLLRVLSVEAIEKLETTLRHKHLAFLSGLPALYYVALPRALAPAVTSQSVITEMEPSPVEIPAEPLI.

Disordered regions lie at residues Ala-133 to Asp-154 and Leu-210 to Pro-231. Polar residues predominate over residues Ser-144–Asp-154.

Belongs to the SPATA31 family.

The sequence is that of Putative protein SPATA31F2P from Homo sapiens (Human).